Here is a 340-residue protein sequence, read N- to C-terminus: Glycerol-3-phosphate dehydrogenase [NAD(P)+] (340 aa).

NADPH-binding residues include Ser15, Tyr16, His36, and Lys110. 3 residues coordinate sn-glycerol 3-phosphate: Lys110, Gly139, and Thr141. Ala143 is a binding site for NADPH. The sn-glycerol 3-phosphate site is built by Lys196, Asp249, Ser259, Arg260, and Asn261. Lys196 (proton acceptor) is an active-site residue. Arg260 is a binding site for NADPH. The NADPH site is built by Val284 and Glu286.

It belongs to the NAD-dependent glycerol-3-phosphate dehydrogenase family.

Its subcellular location is the cytoplasm. It catalyses the reaction sn-glycerol 3-phosphate + NAD(+) = dihydroxyacetone phosphate + NADH + H(+). The catalysed reaction is sn-glycerol 3-phosphate + NADP(+) = dihydroxyacetone phosphate + NADPH + H(+). It participates in membrane lipid metabolism; glycerophospholipid metabolism. In terms of biological role, catalyzes the reduction of the glycolytic intermediate dihydroxyacetone phosphate (DHAP) to sn-glycerol 3-phosphate (G3P), the key precursor for phospholipid synthesis. This chain is Glycerol-3-phosphate dehydrogenase [NAD(P)+], found in Serratia marcescens.